The sequence spans 464 residues: Heterogeneous nuclear ribonucleoprotein K (464 aa).

Met1 bears the N-acetylmethionine mark. The interval 1–37 (METEQPEETFPNTETNGEFGKRPAEDMEEEQAFKRSR) is disordered. Positions 1–276 (METEQPEETF…GRGGRPMPPS (276 aa)) are necessary for interaction with DDX1. The span at 19 to 37 (FGKRPAEDMEEEQAFKRSR) shows a compositional bias: basic and acidic residues. Lys34 carries the N6-acetyllysine; alternate modification. Residue Lys34 forms a Glycyl lysine isopeptide (Lys-Gly) (interchain with G-Cter in SUMO1); alternate linkage. Residue Lys34 forms a Glycyl lysine isopeptide (Lys-Gly) (interchain with G-Cter in SUMO2); alternate linkage. The residue at position 36 (Ser36) is a Phosphoserine. At Thr39 the chain carries Phosphothreonine. A KH 1 domain is found at 42-104 (MVELRILLQS…ETIGEILKKI (63 aa)). Glycyl lysine isopeptide (Lys-Gly) (interchain with G-Cter in SUMO2) cross-links involve residues Lys52 and Lys60. Tandem repeats lie at residues 54–76 (AGAV…NASV) and 59–62 (GKGG). The interval 54-421 (AGAVIGKGGK…QIRHESGASI (368 aa)) is 2 X 22 AA approximate repeats. The 5 X 4 AA repeats of G-X-G-G stretch occupies residues 59-407 (GKGGKNIKAL…LAGSIIGKGG (349 aa)). Phosphoserine occurs at positions 75 and 116. In terms of domain architecture, KH 2 spans 144–209 (DCELRLLIHQ…DRVVECIKII (66 aa)). Lys163 participates in a covalent cross-link: Glycyl lysine isopeptide (Lys-Gly) (interchain with G-Cter in SUMO1); alternate. Lys163 is covalently cross-linked (Glycyl lysine isopeptide (Lys-Gly) (interchain with G-Cter in SUMO2); alternate). Position 198 is an N6-acetyllysine (Lys198). The interval 209–337 (ILDLISESPI…RPGDRYDGMV (129 aa)) is interaction with ZIK1. Phosphoserine is present on residues Ser214 and Ser216. A Glycyl lysine isopeptide (Lys-Gly) (interchain with G-Cter in SUMO2); alternate cross-link involves residue Lys219. Lys219 is subject to N6-succinyllysine; alternate. The interval 236-273 (YGGFTMMFDDRRGRPVGFPMRGRGGFDRMPPGRGGRPM) is RNA-binding RGG-box. 3 repeat units span residues 245-250 (DRRGRP), 257-260 (GRGG), and 267-270 (GRGG). Residues 245–329 (DRRGRPVGFP…LMAYDRRGRP (85 aa)) are 2 X 6 AA approximate repeats. Residues 250 to 329 (PVGFPMRGRG…LMAYDRRGRP (80 aa)) are disordered. Residues 252–266 (GFPMRGRGGFDRMPP) are compositionally biased toward low complexity. A compositionally biased stretch (basic and acidic residues) spans 276 to 285 (SRRDYDDMSP). Ser284 bears the Phosphoserine mark. One copy of the 3-4 repeat lies at 295–298 (GRGG). At Arg316 the chain carries Omega-N-methylarginine. A 2-2 repeat occupies 324-329 (DRRGRP). Arg377 is modified (omega-N-methylarginine). The residue at position 379 (Ser379) is a Phosphoserine. Tyr380 carries the post-translational modification Phosphotyrosine. Residues 387–451 (IITTQVTIPK…DQIQNAQYLL (65 aa)) enclose the KH 3 domain. 2 repeat units span residues 399-421 (AGSI…GASI) and 404-407 (GKGG). An N6-acetyllysine; alternate modification is found at Lys405. Lys405 participates in a covalent cross-link: Glycyl lysine isopeptide (Lys-Gly) (interchain with G-Cter in SUMO2); alternate. Residue Ser420 is modified to Phosphoserine. Lys422 participates in a covalent cross-link: Glycyl lysine isopeptide (Lys-Gly) (interchain with G-Cter in SUMO1); alternate. A Glycyl lysine isopeptide (Lys-Gly) (interchain with G-Cter in SUMO2); alternate cross-link involves residue Lys422. Lys422 participates in a covalent cross-link: Glycyl lysine isopeptide (Lys-Gly) (interchain with G-Cter in SUMO); alternate.

As to quaternary structure, identified in the spliceosome C complex. Interacts with ANKRD28, RBM42 and ZIK1. Interacts with DDX1. Interacts with MDM2; this interaction leads to ubiquitination and proteasomal degradation. Interacts with p53/TP53. Interacts with BRDT. Interacts with IVNS1ABP. Interacts with PPIA/CYPA. Part of a transcription inhibitory ribonucleoprotein complex composed at least of the circular RNA circZNF827, ZNF827 and HNRNPL. Sumoylated by CBX4. Sumoylation is increased upon DNA damage, such as that produced by doxorubicin, etoposide, UV light and camptothecin, due to enhanced CBX4 phosphorylation by HIPK2 under these conditions. Post-translationally, ubiquitinated by MDM2. Doxorubicin treatment does not affect monoubiquitination, but slightly decreases HNRNPK poly-ubiquitination. In terms of processing, O-glycosylated (O-GlcNAcylated), in a cell cycle-dependent manner.

The protein localises to the cytoplasm. It localises to the nucleus. The protein resides in the nucleoplasm. It is found in the cell projection. Its subcellular location is the podosome. Its function is as follows. One of the major pre-mRNA-binding proteins. Binds tenaciously to poly(C) sequences. Likely to play a role in the nuclear metabolism of hnRNAs, particularly for pre-mRNAs that contain cytidine-rich sequences. Can also bind poly(C) single-stranded DNA. Plays an important role in p53/TP53 response to DNA damage, acting at the level of both transcription activation and repression. When sumoylated, acts as a transcriptional coactivator of p53/TP53, playing a role in p21/CDKN1A and 14-3-3 sigma/SFN induction. As far as transcription repression is concerned, acts by interacting with long intergenic RNA p21 (lincRNA-p21), a non-coding RNA induced by p53/TP53. This interaction is necessary for the induction of apoptosis, but not cell cycle arrest. As part of a ribonucleoprotein complex composed at least of ZNF827, HNRNPL and the circular RNA circZNF827 that nucleates the complex on chromatin, may negatively regulate the transcription of genes involved in neuronal differentiation. The protein is Heterogeneous nuclear ribonucleoprotein K (HNRNPK) of Bos taurus (Bovine).